The following is a 556-amino-acid chain: U-box domain-containing protein 38 (556 aa).

The interval 1–34 is disordered; the sequence is MGKNGRLRWNPFSHRSSSSTSSSSRQQQQEQQPP. Residues 13-32 show a composition bias toward low complexity; sequence SHRSSSSTSSSSRQQQQEQQ. One can recognise a U-box domain in the interval 32–108; it reads QPPVEFLCPI…DTWCDTVGVS (77 aa). ARM repeat units lie at residues 256 to 295, 297 to 336, 338 to 378, 380 to 417, and 418 to 468; these read DEAR…NLSL, KKNK…SLSL, DDNK…HLTL, QTNR…NLAC, and CSEG…ALSH.

Binds to SD16, SD17, SD18 and SD129.

The catalysed reaction is S-ubiquitinyl-[E2 ubiquitin-conjugating enzyme]-L-cysteine + [acceptor protein]-L-lysine = [E2 ubiquitin-conjugating enzyme]-L-cysteine + N(6)-ubiquitinyl-[acceptor protein]-L-lysine.. It functions in the pathway protein modification; protein ubiquitination. Its function is as follows. Functions as an E3 ubiquitin ligase. The sequence is that of U-box domain-containing protein 38 (PUB38) from Arabidopsis thaliana (Mouse-ear cress).